The sequence spans 508 residues: Light-independent protochlorophyllide reductase subunit B (508 aa).

Asp-36 serves as a coordination point for [4Fe-4S] cluster. Residue Asp-294 is the Proton donor of the active site. 429-430 (GM) contributes to the substrate binding site.

This sequence belongs to the ChlB/BchB/BchZ family. In terms of assembly, protochlorophyllide reductase is composed of three subunits; ChlL, ChlN and ChlB. Forms a heterotetramer of two ChlB and two ChlN subunits. [4Fe-4S] cluster serves as cofactor.

The catalysed reaction is chlorophyllide a + oxidized 2[4Fe-4S]-[ferredoxin] + 2 ADP + 2 phosphate = protochlorophyllide a + reduced 2[4Fe-4S]-[ferredoxin] + 2 ATP + 2 H2O. It participates in porphyrin-containing compound metabolism; chlorophyll biosynthesis (light-independent). Its function is as follows. Component of the dark-operative protochlorophyllide reductase (DPOR) that uses Mg-ATP and reduced ferredoxin to reduce ring D of protochlorophyllide (Pchlide) to form chlorophyllide a (Chlide). This reaction is light-independent. The NB-protein (ChlN-ChlB) is the catalytic component of the complex. This Picosynechococcus sp. (strain ATCC 27264 / PCC 7002 / PR-6) (Agmenellum quadruplicatum) protein is Light-independent protochlorophyllide reductase subunit B.